A 334-amino-acid chain; its full sequence is Aspartate carbamoyltransferase catalytic subunit (334 aa).

Residues Arg-71 and Thr-72 each coordinate carbamoyl phosphate. Lys-99 lines the L-aspartate pocket. Residues Arg-121, His-151, and Gln-154 each coordinate carbamoyl phosphate. L-aspartate-binding residues include Arg-184 and Arg-239. Positions 280 and 281 each coordinate carbamoyl phosphate.

Belongs to the aspartate/ornithine carbamoyltransferase superfamily. ATCase family. In terms of assembly, heterododecamer (2C3:3R2) of six catalytic PyrB chains organized as two trimers (C3), and six regulatory PyrI chains organized as three dimers (R2).

The enzyme catalyses carbamoyl phosphate + L-aspartate = N-carbamoyl-L-aspartate + phosphate + H(+). It participates in pyrimidine metabolism; UMP biosynthesis via de novo pathway; (S)-dihydroorotate from bicarbonate: step 2/3. Its function is as follows. Catalyzes the condensation of carbamoyl phosphate and aspartate to form carbamoyl aspartate and inorganic phosphate, the committed step in the de novo pyrimidine nucleotide biosynthesis pathway. The protein is Aspartate carbamoyltransferase catalytic subunit of Pseudomonas putida (strain GB-1).